A 423-amino-acid polypeptide reads, in one-letter code: MFS-type transporter phiL (423 aa).

3 consecutive transmembrane segments (helical) span residues 25–45 (IFCFVTYIAANVGLALSNSFI), 82–102 (IGLASVGPIIGPSLGPVLGGV), and 111–131 (YIFVILAAAALIFLFLLIIFF). N-linked (GlcNAc...) asparagine glycosylation is found at Asn141 and Asn151. The segment at 166-185 (DHASGRNLPNAGSKKSNPRN) is disordered. 4 consecutive transmembrane segments (helical) span residues 203 to 223 (VIIFNGLSYAIYYAITSSLSY), 238 to 258 (LSYIPIGVGTIIAALGNGFVV), 298 to 318 (IAVPAVVVACISMLGYAWTMS), and 321 to 341 (LPPIIPLLCLFVFGWGGTAAY). Asn352 is a glycosylation site (N-linked (GlcNAc...) asparagine). Helical transmembrane passes span 369–389 (LLGAGGAAVIMPLINVLGMGW) and 390–410 (TFTAIAGLWVLLSPLVLFLLF).

The protein belongs to the major facilitator superfamily. CAR1 family.

The protein resides in the membrane. Its function is as follows. MFS-type transporter; part of the gene cluster that mediates the biosynthesis of the antihypercholesterolemic agents phomoidrides which are dimeric anhydrides. The chain is MFS-type transporter phiL from Fungal sp. (strain ATCC 74256).